We begin with the raw amino-acid sequence, 300 residues long: MIKKYGIVAIVGKPNVGKSTLINAIMKKKVSIISNKPQTTRNAVKEIYEDDESAIIFTDTPGFHEPSNKLDLFLNHEIEISYKEANVILFVTTMDKELDANDFEIINLIKEANKENIILVISKAEMAKNQDQIDERIHFLKKHIAFKDVVQISALHVINIDKLINTIKNYLHKDVVTDYFRQKAEKEDKFVITEIIREQCLLNLNHEVPHGVGVEIDESKYNQEANHWIIKASIIIEKNSHKPIIIGQNGTMIKKISMGARKQLHEIYDCHISLTIFVKVENNWRDNNNIIKSLGYKIKK.

The region spanning 4–173 is the Era-type G domain; the sequence is KYGIVAIVGK…INTIKNYLHK (170 aa). The interval 12-19 is G1; the sequence is GKPNVGKS. A GTP-binding site is contributed by 12 to 19; the sequence is GKPNVGKS. The segment at 38 to 42 is G2; the sequence is QTTRN. The tract at residues 59–62 is G3; sequence DTPG. GTP-binding positions include 59–63 and 122–125; these read DTPGF and SKAE. The G4 stretch occupies residues 122–125; it reads SKAE. The tract at residues 152 to 154 is G5; sequence ISA. The KH type-2 domain maps to 204–282; sequence LNHEVPHGVG…SLTIFVKVEN (79 aa).

It belongs to the TRAFAC class TrmE-Era-EngA-EngB-Septin-like GTPase superfamily. Era GTPase family. As to quaternary structure, monomer.

The protein localises to the cytoplasm. The protein resides in the cell membrane. Functionally, an essential GTPase that binds both GDP and GTP, with rapid nucleotide exchange. Plays a role in 16S rRNA processing and 30S ribosomal subunit biogenesis and possibly also in cell cycle regulation and energy metabolism. The protein is GTPase Era of Ureaplasma parvum serovar 3 (strain ATCC 27815 / 27 / NCTC 11736).